The following is a 218-amino-acid chain: Protein N-lysine methyltransferase METTL21A (218 aa).

Residues Trp-47, Gly-73–Gly-75, Asp-94, Trp-125, and Ala-143 contribute to the S-adenosyl-L-methionine site.

This sequence belongs to the methyltransferase superfamily. METTL21 family. As to quaternary structure, interacts with heat shock 70 family members; at least some of these proteins are methylation substrates.

The protein localises to the cytoplasm. The catalysed reaction is L-lysyl-[protein] + 3 S-adenosyl-L-methionine = N(6),N(6),N(6)-trimethyl-L-lysyl-[protein] + 3 S-adenosyl-L-homocysteine + 3 H(+). In terms of biological role, protein-lysine methyltransferase that selectively trimethylates residues in heat shock protein 70 (HSP70) family members. Contributes to the in vivo trimethylation of Lys residues in HSPA1 and HSPA8. In vitro methylates 'Lys-561' in HSPA1, 'Lys-564' in HSPA2, 'Lys-585' in HSPA5, 'Lys-563' in HSPA6 and 'Lys-561' in HSPA8. This Bos taurus (Bovine) protein is Protein N-lysine methyltransferase METTL21A (METTL21A).